The sequence spans 168 residues: Ribosome maturation factor RimM (168 aa).

Residues 96–168 form the PRC barrel domain; that stretch reads KDEYYWGDLV…RIRVAWQKDW (73 aa).

The protein belongs to the RimM family. As to quaternary structure, binds ribosomal protein uS19.

It is found in the cytoplasm. An accessory protein needed during the final step in the assembly of 30S ribosomal subunit, possibly for assembly of the head region. Essential for efficient processing of 16S rRNA. May be needed both before and after RbfA during the maturation of 16S rRNA. It has affinity for free ribosomal 30S subunits but not for 70S ribosomes. The protein is Ribosome maturation factor RimM of Azoarcus sp. (strain BH72).